The chain runs to 55 residues: ATP synthase F(0) complex subunit 8 (55 aa).

The helical transmembrane segment at 8 to 24 (PWFSIMVMTWLTLALLI) threads the bilayer. Positions 35–55 (NPPSKKPSLITKPTPWAWPWT) are disordered.

This sequence belongs to the ATPase protein 8 family. As to quaternary structure, component of the ATP synthase complex composed at least of ATP5F1A/subunit alpha, ATP5F1B/subunit beta, ATP5MC1/subunit c (homooctomer), MT-ATP6/subunit a, MT-ATP8/subunit 8, ATP5ME/subunit e, ATP5MF/subunit f, ATP5MG/subunit g, ATP5MK/subunit k, ATP5MJ/subunit j, ATP5F1C/subunit gamma, ATP5F1D/subunit delta, ATP5F1E/subunit epsilon, ATP5PF/subunit F6, ATP5PB/subunit b, ATP5PD/subunit d, ATP5PO/subunit OSCP. ATP synthase complex consists of a soluble F(1) head domain (subunits alpha(3) and beta(3)) - the catalytic core - and a membrane F(0) domain - the membrane proton channel (subunits c, a, 8, e, f, g, k and j). These two domains are linked by a central stalk (subunits gamma, delta, and epsilon) rotating inside the F1 region and a stationary peripheral stalk (subunits F6, b, d, and OSCP).

It is found in the mitochondrion membrane. Subunit 8, of the mitochondrial membrane ATP synthase complex (F(1)F(0) ATP synthase or Complex V) that produces ATP from ADP in the presence of a proton gradient across the membrane which is generated by electron transport complexes of the respiratory chain. ATP synthase complex consist of a soluble F(1) head domain - the catalytic core - and a membrane F(1) domain - the membrane proton channel. These two domains are linked by a central stalk rotating inside the F(1) region and a stationary peripheral stalk. During catalysis, ATP synthesis in the catalytic domain of F(1) is coupled via a rotary mechanism of the central stalk subunits to proton translocation. In vivo, can only synthesize ATP although its ATP hydrolase activity can be activated artificially in vitro. Part of the complex F(0) domain. This Anas platyrhynchos (Mallard) protein is ATP synthase F(0) complex subunit 8.